A 215-amino-acid polypeptide reads, in one-letter code: Myelin protein zero-like protein 2 (215 aa).

A signal peptide spans 1–26 (MYGKSPALVLPLLLSLQLTALCPTEA). The Ig-like V-type domain maps to 27–141 (VEIYTSGALE…DGLVGTIRLS (115 aa)). At 27–154 (VEIYTSGALE…TVPFSEIYFL (128 aa)) the chain is on the extracellular side. 2 N-linked (GlcNAc...) asparagine glycosylation sites follow: N39 and N118. A disulfide bond links C47 and C123. Residues 155-175 (AVAIGSACALMIIVVIVVVLF) traverse the membrane as a helical segment. The Cytoplasmic segment spans residues 176–215 (QHFRKKRWADRADKAEGTKSKEEEKLNQGNKVSVFVEDTD). Over residues 187–201 (ADKAEGTKSKEEEKL) the composition is skewed to basic and acidic residues. Residues 187–215 (ADKAEGTKSKEEEKLNQGNKVSVFVEDTD) form a disordered region.

It belongs to the myelin P0 protein family. As to expression, widely expressed. Expressed in the cochlea, in Deiters' cells, possibly at contact sites with the basilar membrane. Expressed in both outer and inner auditory hair cells. In the stria vascularis, detected in the basal cell layer. Not detected in thymocytes, lymphocytes, macrophage or dendritic cells.

The protein resides in the membrane. In terms of biological role, mediates homophilic cell-cell adhesion. The protein is Myelin protein zero-like protein 2 (Mpzl2) of Mus musculus (Mouse).